Consider the following 117-residue polypeptide: Large ribosomal subunit protein uL18 (117 aa).

The protein belongs to the universal ribosomal protein uL18 family. In terms of assembly, part of the 50S ribosomal subunit; part of the 5S rRNA/L5/L18/L25 subcomplex. Contacts the 5S and 23S rRNAs.

Functionally, this is one of the proteins that bind and probably mediate the attachment of the 5S RNA into the large ribosomal subunit, where it forms part of the central protuberance. The chain is Large ribosomal subunit protein uL18 from Phytoplasma australiense.